The primary structure comprises 617 residues: MSYDYEDLGLVAGLEIHQQLDTETKLFCNCPTERREPEEAVRSFTRYLHPTKSELGELDEAALEESRVDREFEYLAFDTTCLVEEDDEPPHRLDEEALATAMEIATLLDCSVVDQAQVMRKIVVDGSNTSGFQRSTLLATDGEIETDEGAVRIADMLLEEESAARIEEHDDGVTYGLDRLGIPLVEIGTKPDIRTPTQAREAAERIGMLLRSTGKVKRGLGTIRQDVNVSIEEGARVEMKGVQSLDDIDDLVENEVGRQIELLDIAETLRERDAAVGEPRDVTEVFEDTESGVIAGAERVEAVRLDGFDGLVGREIQPDRRLGTELSDHAKRHGAGGIFHTDELPAYGVSEAEVEALRDAVGADAADAVALVAADTDVAETAIEAVADRAETAIEGVPEETRGANEDGTSRYLRPLPGAARMYPETDVPPVEPDPSDIDPPELLTERVDRYQSDLGLDAGLAEQVAYGRYMPVFETAVDRGVDPTTAAGTLASTLTELRRDDVAVENLTDEHLLSVLELVEAGDLPQEGINPALETLADDPSLTAEAAVEEAGLGGVDRETVREAVVEVIERNADQVEAEGMGAFSGLMGECMGQLRGKADGEVVSELLREEIQKRA.

This sequence belongs to the GatB/GatE family. GatE subfamily. In terms of assembly, heterodimer of GatD and GatE.

The catalysed reaction is L-glutamyl-tRNA(Gln) + L-glutamine + ATP + H2O = L-glutaminyl-tRNA(Gln) + L-glutamate + ADP + phosphate + H(+). Allows the formation of correctly charged Gln-tRNA(Gln) through the transamidation of misacylated Glu-tRNA(Gln) in organisms which lack glutaminyl-tRNA synthetase. The reaction takes place in the presence of glutamine and ATP through an activated gamma-phospho-Glu-tRNA(Gln). The GatDE system is specific for glutamate and does not act on aspartate. The sequence is that of Glutamyl-tRNA(Gln) amidotransferase subunit E from Natronomonas pharaonis (strain ATCC 35678 / DSM 2160 / CIP 103997 / JCM 8858 / NBRC 14720 / NCIMB 2260 / Gabara) (Halobacterium pharaonis).